Reading from the N-terminus, the 622-residue chain is Low affinity potassium transport system protein Kup (622 aa).

Helical transmembrane passes span 9 to 29, 46 to 66, 101 to 121, 137 to 157, 165 to 185, 213 to 233, 247 to 267, 276 to 296, 337 to 357, 363 to 383, 395 to 415, and 416 to 436; these read LSAV…TSPL, PDVV…VVSV, ILVV…VITP, PALD…LFVI, VGKL…LLGL, VSFF…ALYA, WFTV…ALLL, PFFL…ATLA, IYIP…IIGF, LAAA…ILFC, FLVA…FSAN, and VLKL…MFII.

Belongs to the HAK/KUP transporter (TC 2.A.72) family.

Its subcellular location is the cell inner membrane. It catalyses the reaction K(+)(in) + H(+)(in) = K(+)(out) + H(+)(out). Functionally, responsible for the low-affinity transport of potassium into the cell. Likely operates as a K(+):H(+) symporter. This is Low affinity potassium transport system protein Kup from Yersinia pseudotuberculosis serotype O:1b (strain IP 31758).